The following is a 58-amino-acid chain: Ribulose bisphosphate carboxylase large chain (58 aa).

The propeptide occupies 1–2; the sequence is MS. Proline 3 carries the post-translational modification N-acetylproline. An N6,N6,N6-trimethyllysine modification is found at lysine 14.

This sequence belongs to the RuBisCO large chain family. Type I subfamily. In terms of assembly, heterohexadecamer of 8 large chains and 8 small chains.

The protein localises to the plastid. It localises to the chloroplast. The enzyme catalyses 2 (2R)-3-phosphoglycerate + 2 H(+) = D-ribulose 1,5-bisphosphate + CO2 + H2O. It catalyses the reaction D-ribulose 1,5-bisphosphate + O2 = 2-phosphoglycolate + (2R)-3-phosphoglycerate + 2 H(+). Functionally, ruBisCO catalyzes two reactions: the carboxylation of D-ribulose 1,5-bisphosphate, the primary event in carbon dioxide fixation, as well as the oxidative fragmentation of the pentose substrate in the photorespiration process. Both reactions occur simultaneously and in competition at the same active site. This chain is Ribulose bisphosphate carboxylase large chain (rbcL), found in Weinmannia silvicola (Towai).